Here is a 193-residue protein sequence, read N- to C-terminus: Probable thymidylate kinase (193 aa).

7–14 is an ATP binding site; sequence GIDGAGKT.

The protein belongs to the thymidylate kinase family.

It catalyses the reaction dTMP + ATP = dTDP + ADP. The sequence is that of Probable thymidylate kinase (tmk) from Thermoplasma acidophilum (strain ATCC 25905 / DSM 1728 / JCM 9062 / NBRC 15155 / AMRC-C165).